Consider the following 600-residue polypeptide: MSGKEVEGVVSPADQQQPAVPEVTDITLEAARKQKIHNLKLKTACLSNEEYVQDLHVSEWSETQKQKLQAAHEKAHELLASVEGGTKWSLTEAYDIKKLMRVCGLEMSVRELYKPEDKPQFMEIVALKKTMNELKQHHNKTRTVSFTGMIDNAIAKLEKIEDELRRSQLDASEMAQVPVAALKNIEDTMNVAVVQTALLGNEEQIKAQLAAVEKANEIRNVAIADGEMAIAEEQYYIKAQLLEHLVELVADKFRIIGQTEDENKSFSKIHEVQKKSFQESASIKDAKRRLKQHCEDDLRNLHDAIQKADLEDAEAMKRFATQKEKSERFIHENLDKQDEAWRRIQELERVLQRLGTERFEEVKRRIEENDREEKRKVEYQQFLDVCGQHKKLLELSVYNCDLALRCMGMLEEIVAEGCSAVKSRHDKTNDELSDLRLQVHQEYLEAFRRLYKTLGQLVYKKEKRLEEIDRNIRTTHIQLEFAIETFDPNAKLHSDKKKDLYKLRAQVEEELEMLKDKMAQALEMFGPTEDALNQAGIDFVHPAEEVESGNMDRRSKMVEYRAHLAKQEEVKIAAEREELKRSKMLQSQQYRGRTMPQITQ.

Positions aspartate 335–glycine 355 are calmodulin-binding.

Heterodimer of a 69 kDa and a 73 kDa protein.

It localises to the cell projection. The protein resides in the cilium. Its subcellular location is the flagellum. The protein localises to the cytoplasm. It is found in the cytoskeleton. Functionally, major component of the paraflagellar rod (PFR). The PFR is a highly ordered lattices of fibrous proteins that are located inside the flagellum and assume a fixed orientation with respect to the microtubular axoneme. The polypeptide is 69 kDa paraflagellar rod protein (PFRA) (Trypanosoma brucei brucei).